The sequence spans 248 residues: UDP-2,3-diacylglucosamine hydrolase (248 aa).

Residues D7, H9, D40, N78, and H113 each contribute to the Mn(2+) site. Residue N78–R79 participates in substrate binding. D121, S159, T163, K166, and H194 together coordinate substrate. Mn(2+)-binding residues include H194 and H196.

Belongs to the LpxH family. The cofactor is Mn(2+).

The protein localises to the cell inner membrane. It catalyses the reaction UDP-2-N,3-O-bis[(3R)-3-hydroxytetradecanoyl]-alpha-D-glucosamine + H2O = 2-N,3-O-bis[(3R)-3-hydroxytetradecanoyl]-alpha-D-glucosaminyl 1-phosphate + UMP + 2 H(+). It functions in the pathway glycolipid biosynthesis; lipid IV(A) biosynthesis; lipid IV(A) from (3R)-3-hydroxytetradecanoyl-[acyl-carrier-protein] and UDP-N-acetyl-alpha-D-glucosamine: step 4/6. In terms of biological role, hydrolyzes the pyrophosphate bond of UDP-2,3-diacylglucosamine to yield 2,3-diacylglucosamine 1-phosphate (lipid X) and UMP by catalyzing the attack of water at the alpha-P atom. Involved in the biosynthesis of lipid A, a phosphorylated glycolipid that anchors the lipopolysaccharide to the outer membrane of the cell. The protein is UDP-2,3-diacylglucosamine hydrolase of Pseudomonas syringae pv. syringae (strain B728a).